The chain runs to 263 residues: MAPK-interacting and spindle-stabilizing protein (263 aa).

The interval 13–238 is disordered; it reads GSPAPFLPSG…LGKQQGHNTT (226 aa). Pro residues-rich tracts occupy residues 14–34 and 140–155; these read SPAP…PYPG and GLQP…PPGP. Positions 156 to 165 are enriched in low complexity; it reads SAASPGPGSL. The span at 176 to 189 shows a compositional bias: polar residues; it reads PSDSSNPESTLEST. A compositionally biased stretch (basic residues) spans 202–213; sequence IKRRRSKKKSKR.

Belongs to the MISS family. As to quaternary structure, interacts with MAPK1. In terms of processing, phosphorylated in vitro by MAPK1.

Its subcellular location is the cytoplasm. It is found in the cytoskeleton. The protein localises to the spindle. Involved in the maintenance of the spindle integrity during the cytostatic factor (CSF) arrest of oocytes. In Mus musculus (Mouse), this protein is MAPK-interacting and spindle-stabilizing protein (Mapk1ip1).